Consider the following 345-residue polypeptide: KRR1 small subunit processome component homolog (345 aa).

The KH domain maps to 125-193 (DIIKIGNLVH…VRDIVLETMN (69 aa)). Basic residues predominate over residues 232 to 245 (NISKRKQPKVKKQK). Disordered regions lie at residues 232–260 (NISK…ESKV) and 273–345 (QEQK…ARSS). Residues 270–298 (FLNQEQKQAKRNQERTEKQKEAAKRQDER) adopt a coiled-coil conformation. Basic and acidic residues-rich tracts occupy residues 276–302 (KQAK…RNKD) and 315–330 (RKKE…DVKA). The segment covering 331 to 345 (LKAKLIKANKKARSS) has biased composition (basic residues).

This sequence belongs to the KRR1 family. In terms of assembly, monomer. Component of the ribosomal small subunit (SSU) processome.

It localises to the nucleus. The protein localises to the nucleolus. In terms of biological role, required for 40S ribosome biogenesis. Involved in nucleolar processing of pre-18S ribosomal RNA and ribosome assembly. Binds to RNA. Required for female germline development, cell viability during eye development and for survival of dividing cells and epithelial cells during early wing disk development. The protein is KRR1 small subunit processome component homolog (dbe) of Drosophila melanogaster (Fruit fly).